Consider the following 313-residue polypeptide: Beta-ketoacyl-[acyl-carrier-protein] synthase III (313 aa).

Active-site residues include Cys112 and His238. Residues 239–243 (QANIR) form an ACP-binding region. Asn268 is an active-site residue.

This sequence belongs to the thiolase-like superfamily. FabH family. As to quaternary structure, homodimer.

It is found in the cytoplasm. The catalysed reaction is malonyl-[ACP] + acetyl-CoA + H(+) = 3-oxobutanoyl-[ACP] + CO2 + CoA. It participates in lipid metabolism; fatty acid biosynthesis. In terms of biological role, catalyzes the condensation reaction of fatty acid synthesis by the addition to an acyl acceptor of two carbons from malonyl-ACP. Catalyzes the first condensation reaction which initiates fatty acid synthesis and may therefore play a role in governing the total rate of fatty acid production. Possesses both acetoacetyl-ACP synthase and acetyl transacylase activities. Its substrate specificity determines the biosynthesis of branched-chain and/or straight-chain of fatty acids. This Staphylococcus epidermidis (strain ATCC 35984 / DSM 28319 / BCRC 17069 / CCUG 31568 / BM 3577 / RP62A) protein is Beta-ketoacyl-[acyl-carrier-protein] synthase III.